A 208-amino-acid polypeptide reads, in one-letter code: N-(5'-phosphoribosyl)anthranilate isomerase (208 aa).

It belongs to the TrpF family.

The enzyme catalyses N-(5-phospho-beta-D-ribosyl)anthranilate = 1-(2-carboxyphenylamino)-1-deoxy-D-ribulose 5-phosphate. The protein operates within amino-acid biosynthesis; L-tryptophan biosynthesis; L-tryptophan from chorismate: step 3/5. This chain is N-(5'-phosphoribosyl)anthranilate isomerase, found in Methanococcus vannielii (strain ATCC 35089 / DSM 1224 / JCM 13029 / OCM 148 / SB).